Consider the following 407-residue polypeptide: Argininosuccinate synthase (407 aa).

ATP-binding positions include A16–S24 and A44. L-citrulline-binding residues include Y96 and S101. G126 serves as a coordination point for ATP. L-aspartate is bound by residues T128, N132, and D133. N132 serves as a coordination point for L-citrulline. L-citrulline-binding residues include R136, S185, S194, E270, and Y282.

It belongs to the argininosuccinate synthase family. Type 1 subfamily. As to quaternary structure, homotetramer.

The protein localises to the cytoplasm. It carries out the reaction L-citrulline + L-aspartate + ATP = 2-(N(omega)-L-arginino)succinate + AMP + diphosphate + H(+). The protein operates within amino-acid biosynthesis; L-arginine biosynthesis; L-arginine from L-ornithine and carbamoyl phosphate: step 2/3. This is Argininosuccinate synthase from Shewanella denitrificans (strain OS217 / ATCC BAA-1090 / DSM 15013).